We begin with the raw amino-acid sequence, 929 residues long: Band 3 anion transport protein (929 aa).

N-acetylmethionine is present on M1. At 1–422 the chain is on the cytoplasmic side; the sequence is MGDMRDHEEV…LSDITDALSP (422 aa). S18 carries the post-translational modification Phosphoserine. Phosphotyrosine is present on residues Y31 and Y56. Residues 46–67 form a disordered region; the sequence is ALPTEQTATDYVPSSTSTPHPS. Residues 58-67 show a composition bias toward low complexity; that stretch reads PSSTSTPHPS. Positions 69–303 are globular; that stretch reads GQVYVELQEL…LGRAAATLMT (235 aa). Residues 190-199 form an interaction with ANK1 region; the sequence is AVLTRSGGAS. A phosphoserine mark is found at S199, S222, and S363. The interval 317 to 370 is dimerization arm; the sequence is REELLRSLESFLDCSLVLPPTDAPSEKALLNLVPVQKELLRRRYLPSPAKPDPN. A disordered region spans residues 366–389; that stretch reads KPDPNLYNTLDLNGGKGGPGDEDD. Y372 is modified (phosphotyrosine). Phosphothreonine is present on T374. The helical transmembrane segment at 423–446 threads the bilayer; the sequence is QVLAAVIFIYFAALSPAVTFGGLL. At 447–454 the chain is on the extracellular side; sequence GEKTRNLM. The helical transmembrane segment at 455–475 threads the bilayer; it reads GVSELLISTAVQGILFALLGA. Topologically, residues 476–478 are cytoplasmic; that stretch reads QPL. A discontinuously helical transmembrane segment spans residues 479–495; that stretch reads LVLGFSGPLLVFEEAFF. The Extracellular segment spans residues 496-504; that stretch reads SFCESNNLE. The helical transmembrane segment at 505–525 threads the bilayer; it reads YIVGRAWIGFWLILLVMLVVA. The Cytoplasmic portion of the chain corresponds to 526–537; it reads FEGSFLVQYISR. Residues 538 to 560 traverse the membrane as a helical segment; the sequence is YTQEIFSFLISLIFIYETFSKLI. Residues 561-588 lie on the Extracellular side of the membrane; sequence KIFQDYPLQQTYAPVVMKPKPQGPVPNT. Residues 589 to 609 form a helical membrane-spanning segment; it reads ALFSLVLMAGTFLLAMTLRKF. At 610–620 the chain is on the cytoplasmic side; that stretch reads KNSTYFPGKLR. Residues 621–641 traverse the membrane as a helical segment; the sequence is RVIGDFGVPISILIMVLVDSF. Residues 642–681 lie on the Extracellular side of the membrane; sequence IKGTYTQKLSVPDGLKVSNSSARGWVIHPLGLYRLFPTWM. A glycan (N-linked (GlcNAc...) asparagine) is linked at N660. A helical membrane pass occupies residues 682–702; it reads MFASVLPALLVFILIFLESQI. Residues 703 to 718 lie on the Cytoplasmic side of the membrane; the sequence is TTLIVSKPERKMIKGS. Residues 719 to 737 traverse the membrane as a helical segment; that stretch reads GFHLDLLLVVGMGGVAALF. A discontinuously helical membrane pass occupies residues 738-755; it reads GMPWLSATTVRSVTHANA. Residues 756–778 lie on the Cytoplasmic side of the membrane; the sequence is LTVMGKASGPGAAAQIQEVKEQR. 2 helical membrane passes run 779–799 and 800–818; these read ISGLLVSVLVGLSILMEPILS and RIPLAVLFGIFLYMGVTSL. The Cytoplasmic portion of the chain corresponds to 819–856; sequence SGIQLFDRILLLFKPPKYHPDVPFVKRVKTWRMHLFTG. The segment at residues 857–887 is an intramembrane region (discontinuously helical); it reads IQIICLAVLWVVKSTPASLALPFVLILTVPL. C861 carries S-palmitoyl cysteine lipidation. The Cytoplasmic segment spans residues 888–929; that stretch reads RRLILPLIFRELELQCLDGDDAKVTFDEENGLDEYDEVPMPV. Y922 carries the post-translational modification Phosphotyrosine.

This sequence belongs to the anion exchanger (TC 2.A.31) family. In terms of assembly, a dimer in solution, but in its membrane environment, it exists primarily as a mixture of dimers and tetramers and spans the membrane asymmetrically. Component of the ankyrin-1 complex in the erythrocyte, composed of ANK1, RHCE, RHAG, SLC4A1, EPB42, GYPA, GYPB and AQP1. Interacts with STOM; this interaction positively regulates SLC4A1 activity. Interacts with GYPA; a GYPA monomer is bound at each end of the SLC4A1 dimer forming a heterotetramer. Three SLC4A1 dimers (Band 3-I, Band 3-II and Band 3-III) participates in the ankyrin-1 complex. Interacts (via the cytoplasmic domain) with EPB42; this interaction is mediated by the SLC4A1 Band 3-I dimer. Interacts (via the cytoplasmic domain) directly with ANK1; this interaction is mediated by the SLC4A1 Band 3-II and Band 3-III dimers. Interacts with TMEM139. As to expression, detected in erythrocytes (at protein level).

It localises to the cell membrane. The protein localises to the basolateral cell membrane. The enzyme catalyses hydrogencarbonate(in) + chloride(out) = hydrogencarbonate(out) + chloride(in). Its function is as follows. Functions both as a transporter that mediates electroneutral anion exchange across the cell membrane and as a structural protein. Component of the ankyrin-1 complex of the erythrocyte membrane; required for normal flexibility and stability of the erythrocyte membrane and for normal erythrocyte shape via the interactions of its cytoplasmic domain with cytoskeletal proteins, glycolytic enzymes, and hemoglobin. Functions as a transporter that mediates the 1:1 exchange of inorganic anions across the erythrocyte membrane. Mediates chloride-bicarbonate exchange in the kidney, and is required for normal acidification of the urine. The protein is Band 3 anion transport protein of Mus musculus (Mouse).